Reading from the N-terminus, the 183-residue chain is Glutathione-regulated potassium-efflux system ancillary protein KefG (183 aa).

Belongs to the NAD(P)H dehydrogenase (quinone) family. KefG subfamily. Interacts with KefB.

It localises to the cell inner membrane. The catalysed reaction is a quinone + NADH + H(+) = a quinol + NAD(+). It carries out the reaction a quinone + NADPH + H(+) = a quinol + NADP(+). Functionally, regulatory subunit of a potassium efflux system that confers protection against electrophiles. Required for full activity of KefB. The polypeptide is Glutathione-regulated potassium-efflux system ancillary protein KefG (Yersinia pestis bv. Antiqua (strain Angola)).